A 560-amino-acid chain; its full sequence is Probable 2,3-bisphosphoglycerate-independent phosphoglycerate mutase 2 (560 aa).

At G2 the chain carries N-acetylglycine. D29 and S82 together coordinate Mn(2+). The active-site Phosphoserine intermediate is the S82. Substrate contacts are provided by residues H141, 171-172, R207, R214, 287-290, and K362; these read RD and RADR. The Mn(2+) site is built by D431, H435, D472, H473, and H502.

This sequence belongs to the BPG-independent phosphoglycerate mutase family. In terms of assembly, monomer. It depends on Mn(2+) as a cofactor.

It localises to the cytoplasm. It carries out the reaction (2R)-2-phosphoglycerate = (2R)-3-phosphoglycerate. It functions in the pathway carbohydrate degradation; glycolysis; pyruvate from D-glyceraldehyde 3-phosphate: step 3/5. In terms of biological role, catalyzes the interconversion of 2-phosphoglycerate (2-PGA) and 3-phosphoglycerate (3-PGA). Required for guard cell function (e.g. blue light-, abscisic acid- (ABA), and low CO(2)-regulated stomatal movements) and fertility (e.g. pollen grains production). The sequence is that of Probable 2,3-bisphosphoglycerate-independent phosphoglycerate mutase 2 (PGM2) from Arabidopsis thaliana (Mouse-ear cress).